A 201-amino-acid chain; its full sequence is MITNNLVPTVIEKTAGGERAFDIYSRLLKERIVFLNGEVNDHSANLVIAQLLFLESEDPDKDIYFYINSPGGMVTAGMGVYDTMQFIKPDVSTICIGLAASMGSLLLAGGAKGKRYSLPSSQIMIHQPLGGFRGQASDIEIHAKNILRIKDRLNKVLAHHTGQDLETIVKDTDRDNFMMADEAKAYGLIDHVIESREAIIK.

Residue Ser-101 is the Nucleophile of the active site. His-126 is an active-site residue.

It belongs to the peptidase S14 family. In terms of assembly, fourteen ClpP subunits assemble into 2 heptameric rings which stack back to back to give a disk-like structure with a central cavity, resembling the structure of eukaryotic proteasomes.

The protein localises to the cytoplasm. The catalysed reaction is Hydrolysis of proteins to small peptides in the presence of ATP and magnesium. alpha-casein is the usual test substrate. In the absence of ATP, only oligopeptides shorter than five residues are hydrolyzed (such as succinyl-Leu-Tyr-|-NHMec, and Leu-Tyr-Leu-|-Tyr-Trp, in which cleavage of the -Tyr-|-Leu- and -Tyr-|-Trp bonds also occurs).. Its function is as follows. Cleaves peptides in various proteins in a process that requires ATP hydrolysis. Has a chymotrypsin-like activity. Plays a major role in the degradation of misfolded proteins. The sequence is that of ATP-dependent Clp protease proteolytic subunit from Francisella tularensis subsp. tularensis (strain FSC 198).